The primary structure comprises 188 residues: dITP/XTP pyrophosphatase (188 aa).

Residue 7–12 (TGNIGK) participates in substrate binding. Residues Glu-36 and Asp-65 each coordinate Mg(2+). Asp-65 acts as the Proton acceptor in catalysis. Residues Ser-66, 141-144 (FGYD), Lys-164, and 169-170 (HR) each bind substrate.

The protein belongs to the HAM1 NTPase family. As to quaternary structure, homodimer. Mg(2+) is required as a cofactor.

The enzyme catalyses XTP + H2O = XMP + diphosphate + H(+). It carries out the reaction dITP + H2O = dIMP + diphosphate + H(+). The catalysed reaction is ITP + H2O = IMP + diphosphate + H(+). Pyrophosphatase that catalyzes the hydrolysis of nucleoside triphosphates to their monophosphate derivatives, with a high preference for the non-canonical purine nucleotides XTP (xanthosine triphosphate), dITP (deoxyinosine triphosphate) and ITP. Seems to function as a house-cleaning enzyme that removes non-canonical purine nucleotides from the nucleotide pool, thus preventing their incorporation into DNA/RNA and avoiding chromosomal lesions. This is dITP/XTP pyrophosphatase from Methanopyrus kandleri (strain AV19 / DSM 6324 / JCM 9639 / NBRC 100938).